Consider the following 345-residue polypeptide: Heat stress transcription factor A-4c (345 aa).

Residues 11–105 (LPPFLTKTYE…LMKNIHRRKP (95 aa)) mediate DNA binding. The hydrophobic repeat HR-A/B stretch occupies residues 119-185 (PLTESERRSM…SIVAYVSQVL (67 aa)). Residues 199–203 (RRKRR) carry the Nuclear localization signal motif. The short motif at 226-235 (LTFWENLVSE) is the AHA1 element. The segment at 240–329 (SGLQSSSMDH…NGNKIGNQRT (90 aa)) is disordered. The segment covering 274–283 (PPVTVTAPAP) has biased composition (low complexity). An AHA2 motif is present at residues 289 to 298 (DDFWEQCLTE). Composition is skewed to polar residues over residues 296-308 (LTEN…QQEV) and 317-329 (NDNN…NQRT).

It belongs to the HSF family. Class A subfamily. In terms of assembly, homotrimer. In terms of processing, exhibits temperature-dependent phosphorylation. As to expression, expressed in roots, seedlings and at lower levels in leaves.

The protein localises to the nucleus. In terms of biological role, transcriptional activator that specifically binds DNA sequence 5'-AGAAnnTTCT-3' known as heat shock promoter elements (HSE). May be involved in general response to auxin. This is Heat stress transcription factor A-4c (HSFA4C) from Arabidopsis thaliana (Mouse-ear cress).